The sequence spans 351 residues: NADP-dependent isopropanol dehydrogenase (351 aa).

Cysteine 37, histidine 59, glutamate 60, and aspartate 150 together coordinate Zn(2+). NADP(+) is bound by residues 175 to 178 (IGAV), 198 to 200 (GSR), tyrosine 218, 265 to 267 (INY), and lysine 340.

It belongs to the zinc-containing alcohol dehydrogenase family. Homotetramer. Requires Zn(2+) as cofactor.

The catalysed reaction is propan-2-ol + NADP(+) = acetone + NADPH + H(+). Functionally, alcohol dehydrogenase with a preference for medium chain secondary alcohols, such as 2-butanol and isopropanol. Has very low activity with primary alcohols, such as ethanol. Under physiological conditions, the enzyme reduces aldehydes and 2-ketones to produce secondary alcohols. Is active with acetaldehyde and propionaldehyde. The polypeptide is NADP-dependent isopropanol dehydrogenase (adh) (Clostridium beijerinckii (Clostridium MP)).